The chain runs to 212 residues: Thymidylate kinase (212 aa).

11 to 18 (GPDGAGKT) lines the ATP pocket.

It belongs to the thymidylate kinase family.

The enzyme catalyses dTMP + ATP = dTDP + ADP. Functionally, phosphorylation of dTMP to form dTDP in both de novo and salvage pathways of dTTP synthesis. The chain is Thymidylate kinase from Streptococcus mutans serotype c (strain ATCC 700610 / UA159).